The chain runs to 453 residues: Lysine histidine transporter-like 1 (453 aa).

Residues 1–44 (MYIQMTDGVPPPPEQSSLDHRIDELERQKEIDDWLPITSSRNAK) are Cytoplasmic-facing. 2 helical membrane-spanning segments follow: residues 45–65 (WWYSTFHNVTAMVGAGVLGLP) and 66–86 (FFMAQLGWGPGIAVLILSWII). Residues 87-122 (TLYTLWQMVEMHEMVPGKRFDRYHELGQFAFGERLG) lie on the Cytoplasmic side of the membrane. The chain crosses the membrane as a helical span at residues 123–143 (LYIIVPQQIIVEVGVCIVYMV). Residues 144–164 (TGGQSLKKFHEIACQDCSPIR) lie on the Extracellular side of the membrane. Residues 165 to 185 (LSFFIMIFASSHFVLSHLPNF) traverse the membrane as a helical segment. Residues 186–187 (NS) are Cytoplasmic-facing. Residues 188 to 208 (ISGVSLVAAVMSLSYSTIAWT) form a helical membrane-spanning segment. Over 209 to 231 (ATAAKGVQEDVQYGYKSGTTAST) the chain is Extracellular. A helical transmembrane segment spans residues 232–252 (VLSFFTGLGGIAFAYAGHNVV). Over 253 to 276 (LEIQATIPSTPSNPSKGPMWRGVV) the chain is Cytoplasmic. A helical transmembrane segment spans residues 277–297 (VAYVVVALCYFPVALVGYGVF). Over 298–318 (GNAVLDNVLMSLETPVWAIAT) the chain is Extracellular. A helical transmembrane segment spans residues 319–339 (ANLFVVMHVIGSYQIFAMPVF). Residues 340-359 (DMVETFLVKKLNFKPSTVLR) lie on the Cytoplasmic side of the membrane. Residues 360–382 (FIVRNVYVALTMFIGIMIPFFGG) traverse the membrane as a helical segment. The Extracellular segment spans residues 383–385 (LLA). Residues 386–408 (FFGGFAFAPTSYFLPCIMWLLIY) traverse the membrane as a helical segment. Topologically, residues 409–412 (KPKR) are cytoplasmic. The helical transmembrane segment at 413 to 433 (FSLSWWTNWVCIVLGVVLMIL) threads the bilayer. Topologically, residues 434 to 453 (SSIGGLRQIIIQSKDYSFFS) are extracellular.

It belongs to the amino acid/polyamine transporter 2 family. Amino acid/auxin permease (AAAP) (TC 2.A.18.2) subfamily.

It is found in the cell membrane. Amino acid transporter. The sequence is that of Lysine histidine transporter-like 1 from Arabidopsis thaliana (Mouse-ear cress).